Here is a 374-residue protein sequence, read N- to C-terminus: CMP-N-acetylneuraminate-beta-1,4-galactoside alpha-2,3-sialyltransferase (374 aa).

Over 1-8 the chain is Cytoplasmic; that stretch reads MGLLVFVR. A helical; Signal-anchor for type II membrane protein transmembrane segment spans residues 9 to 28; the sequence is NLLLALCLFLVLGFLYYSAW. Residues 29–374 lie on the Lumenal side of the membrane; it reads KLHLLQWEDS…RVITDLSSGI (346 aa). Residues asparagine 79 and asparagine 170 are each glycosylated (N-linked (GlcNAc...) asparagine). Residues cysteine 159 and cysteine 313 are joined by a disulfide bond.

It belongs to the glycosyltransferase 29 family. Post-translationally, the soluble form derives from the membrane form by proteolytic processing. As to expression, found in all tissues tested. High expression found in brain, liver, kidney, colon, heart and lung.

Its subcellular location is the golgi apparatus. The protein resides in the golgi stack membrane. The protein localises to the secreted. It carries out the reaction a beta-D-galactosyl-(1-&gt;4)-N-acetyl-beta-D-glucosaminyl derivative + CMP-N-acetyl-beta-neuraminate = an N-acetyl-alpha-neuraminyl-(2-&gt;3)-beta-D-galactosyl-(1-&gt;4)-N-acetyl-beta-D-glucosaminyl derivative + CMP + H(+). The protein operates within protein modification; protein glycosylation. Its function is as follows. Catalyzes the formation of the NeuAc-alpha-2,3-Gal-beta-1,4-GlcNAc-, NeuAc-alpha-2,3-Gal-beta-1,3-GlcNAc- and NeuAc-alpha-2,3-Gal-beta-1,3-GalNAc- sequences found in terminal carbohydrate groups of glycoproteins and glycolipids. The highest activity is toward Gal-beta-1,3-GlcNAc and the lowest toward Gal-beta-1,3-GalNAc. The sequence is that of CMP-N-acetylneuraminate-beta-1,4-galactoside alpha-2,3-sialyltransferase (St3gal3) from Rattus norvegicus (Rat).